A 434-amino-acid chain; its full sequence is Transcription factor AP-2-epsilon (434 aa).

A disordered region spans residues 30-123 (LNQGPYSSAP…GLSLDPRRDY (94 aa)). A compositionally biased stretch (pro residues) spans 52–62 (PYFPPPYPQPP). The PPxY motif signature appears at 53-58 (YFPPPY). Positions 81–97 (SSINSIHHQHQQPSWHT) are enriched in polar residues. The interval 278–408 (RRKAANVTLL…YLLESLKGMD (131 aa)) is H-S-H (helix-span-helix), dimerization. Positions 415-434 (TGNGHSAAESKSEKDIKHRK) are disordered. Over residues 422-434 (AESKSEKDIKHRK) the composition is skewed to basic and acidic residues.

It belongs to the AP-2 family. In terms of assembly, binds DNA as a dimer. Can form homodimers or heterodimers with other AP-2 family members.

It is found in the nucleus. Its function is as follows. Sequence-specific DNA-binding protein that interacts with inducible viral and cellular enhancer elements to regulate transcription of selected genes. AP-2 factors bind to the consensus sequence 5'-GCCNNNGGC-3' and activate genes involved in a large spectrum of important biological functions. The protein is Transcription factor AP-2-epsilon of Xenopus laevis (African clawed frog).